Here is an 838-residue protein sequence, read N- to C-terminus: Translation initiation factor IF-2 (838 aa).

Residues 50–108 (VQSGKKPESPEKKDIKQNTQKEAPETQTQQKPIEQEVETKQNIDSTPIKVEPKQESLAS) form a disordered region. Basic and acidic residues predominate over residues 54–65 (KKPESPEKKDIK). Polar residues predominate over residues 66 to 81 (QNTQKEAPETQTQQKP). The tr-type G domain occupies 337–506 (SRAPVVTIMG…LLQAELLELK (170 aa)). The G1 stretch occupies residues 346 to 353 (GHVDHGKT). GTP is bound at residue 346-353 (GHVDHGKT). A G2 region spans residues 371–375 (GITQH). Residues 392 to 395 (DTPG) form a G3 region. Residues 392–396 (DTPGH) and 446–449 (NKMD) each bind GTP. The interval 446–449 (NKMD) is G4. Positions 482 to 484 (SAK) are G5.

Belongs to the TRAFAC class translation factor GTPase superfamily. Classic translation factor GTPase family. IF-2 subfamily.

It localises to the cytoplasm. One of the essential components for the initiation of protein synthesis. Protects formylmethionyl-tRNA from spontaneous hydrolysis and promotes its binding to the 30S ribosomal subunits. Also involved in the hydrolysis of GTP during the formation of the 70S ribosomal complex. The sequence is that of Translation initiation factor IF-2 from Campylobacter fetus subsp. fetus (strain 82-40).